The primary structure comprises 292 residues: Elongation factor Ts (292 aa).

The segment at 80 to 83 (TDFV) is involved in Mg(2+) ion dislocation from EF-Tu.

This sequence belongs to the EF-Ts family.

The protein localises to the cytoplasm. Its function is as follows. Associates with the EF-Tu.GDP complex and induces the exchange of GDP to GTP. It remains bound to the aminoacyl-tRNA.EF-Tu.GTP complex up to the GTP hydrolysis stage on the ribosome. In Limosilactobacillus fermentum (strain NBRC 3956 / LMG 18251) (Lactobacillus fermentum), this protein is Elongation factor Ts.